The primary structure comprises 485 residues: Arginine/ornithine antiporter ArcD (485 aa).

11 helical membrane passes run 23–43, 48–68, 79–99, 116–136, 148–168, 203–223, 246–266, 269–289, 323–343, 362–382, and 441–461; these read ALLP…LLGL, PLLW…GYTW, IVMG…IASW, LTPA…ATAI, IALV…AGAI, MFPN…VLGL, GTYT…GLAI, YPAL…SILI, LEGS…GGIL, SVGG…ALTA, and VLSY…VVIM.

Belongs to the NhaC Na(+)/H(+) (TC 2.A.35) antiporter family.

Its subcellular location is the cell membrane. It carries out the reaction L-ornithine(in) + L-arginine(out) = L-ornithine(out) + L-arginine(in). Its function is as follows. Uptake of arginine from the medium in exchange for ornithine. The protein is Arginine/ornithine antiporter ArcD (arcD) of Halobacterium salinarum (strain ATCC 700922 / JCM 11081 / NRC-1) (Halobacterium halobium).